The chain runs to 331 residues: Protein PER1 homolog (331 aa).

Residues 1 to 24 (MRVLRNFTIFFLFTALSLFRQISA) form the signal peptide. Residues 25–100 (SAGDLHPVYV…QYHGKWYFIR (76 aa)) lie on the Lumenal side of the membrane. The helical transmembrane segment at 101-121 (VFGIQELFSVFFSMLNFMIHY) threads the bilayer. Residues 122–139 (NGYHIMRRCIPDEHPAKR) are Cytoplasmic-facing. Residues 140–160 (LCLSWAIVGMNAWVWSSVFHI) traverse the membrane as a helical segment. At 161–168 (RDTPITEK) the chain is on the lumenal side. Residues 169–189 (LDYFSAGAFVLFGSYCTLILM) form a helical membrane-spanning segment. Over 190 to 199 (LRLDQLPGGK) the chain is Cytoplasmic. The chain crosses the membrane as a helical span at residues 200-220 (LLCWIIGVIFIAAFIAHVSYL). The Lumenal portion of the chain corresponds to 221-232 (SFYSFDYGYNMK). The chain crosses the membrane as a helical span at residues 233 to 250 (ANVAVGLVQNILWYYYSW). The Cytoplasmic portion of the chain corresponds to 251-263 (SNRNSGLYWTRWP). Residues 264 to 284 (AYIVTSLMLATSLELFDFSPI) form a helical membrane-spanning segment. At 285–289 (ANLID) the chain is on the lumenal side. The chain crosses the membrane as a helical span at residues 290–310 (AHALWHLSTVPITHYLYGFVV). Residues 311–331 (RKCSYDLTKGTFKIKAYDSSR) lie on the Cytoplasmic side of the membrane.

The protein belongs to the PGAP3/PER1 family.

It is found in the endoplasmic reticulum membrane. Its subcellular location is the vacuole membrane. Involved in the lipid remodeling steps of GPI-anchor maturation. Lipid remodeling steps consist in the generation of 2 saturated fatty chains at the sn-2 position of GPI-anchors proteins. Required for phospholipase A2 activity that removes an acyl-chain at the sn-2 position of GPI-anchors during the remodeling of GPI. Required for efficient transport of GPI-anchor proteins. The chain is Protein PER1 homolog from Schizosaccharomyces pombe (strain 972 / ATCC 24843) (Fission yeast).